We begin with the raw amino-acid sequence, 292 residues long: Phosphatidylglycerol--prolipoprotein diacylglyceryl transferase (292 aa).

4 helical membrane passes run 24-44 (ISVH…LLIA), 65-85 (FFIW…VLIY), 110-130 (GISG…AIIF), and 136-156 (QSFW…YVFG). An a 1,2-diacyl-sn-glycero-3-phospho-(1'-sn-glycerol)-binding site is contributed by Arg-157. The next 3 helical transmembrane spans lie at 192–212 (SQLF…ICLL), 219–239 (GTLL…CEYF), and 256–276 (GQIL…FVFV).

Belongs to the Lgt family.

The protein resides in the cell inner membrane. It carries out the reaction L-cysteinyl-[prolipoprotein] + a 1,2-diacyl-sn-glycero-3-phospho-(1'-sn-glycerol) = an S-1,2-diacyl-sn-glyceryl-L-cysteinyl-[prolipoprotein] + sn-glycerol 1-phosphate + H(+). The protein operates within protein modification; lipoprotein biosynthesis (diacylglyceryl transfer). Catalyzes the transfer of the diacylglyceryl group from phosphatidylglycerol to the sulfhydryl group of the N-terminal cysteine of a prolipoprotein, the first step in the formation of mature lipoproteins. This chain is Phosphatidylglycerol--prolipoprotein diacylglyceryl transferase, found in Helicobacter hepaticus (strain ATCC 51449 / 3B1).